We begin with the raw amino-acid sequence, 105 residues long: Nitrogen fixation nifHD region glnB-like protein 1 (105 aa).

The protein belongs to the P(II) protein family.

In terms of biological role, could be involved in the regulation of nitrogen fixation. This Methanococcus maripaludis (Methanococcus deltae) protein is Nitrogen fixation nifHD region glnB-like protein 1 (glnBI).